The following is a 311-amino-acid chain: HPr kinase/phosphorylase (311 aa).

Residues His138 and Lys159 contribute to the active site. 153 to 160 is an ATP binding site; sequence GDSGIGKS. Ser160 is a Mg(2+) binding site. Asp177 acts as the Proton acceptor; for phosphorylation activity. Proton donor; for dephosphorylation activity in catalysis. An important for the catalytic mechanism of both phosphorylation and dephosphorylation region spans residues 201–210; that stretch reads IEIRGVGIID. Residue Glu202 coordinates Mg(2+). Arg243 is a catalytic residue. The interval 264–269 is important for the catalytic mechanism of dephosphorylation; that stretch reads PVKTGR.

This sequence belongs to the HPrK/P family. As to quaternary structure, homohexamer. Mg(2+) is required as a cofactor.

It carries out the reaction [HPr protein]-L-serine + ATP = [HPr protein]-O-phospho-L-serine + ADP + H(+). It catalyses the reaction [HPr protein]-O-phospho-L-serine + phosphate + H(+) = [HPr protein]-L-serine + diphosphate. In terms of biological role, catalyzes the ATP- as well as the pyrophosphate-dependent phosphorylation of a specific serine residue in HPr, a phosphocarrier protein of the phosphoenolpyruvate-dependent sugar phosphotransferase system (PTS). HprK/P also catalyzes the pyrophosphate-producing, inorganic phosphate-dependent dephosphorylation (phosphorolysis) of seryl-phosphorylated HPr (P-Ser-HPr). The two antagonistic activities of HprK/P are regulated by several intracellular metabolites, which change their concentration in response to the absence or presence of rapidly metabolisable carbon sources (glucose, fructose, etc.) in the growth medium. Therefore, by controlling the phosphorylation state of HPr, HPrK/P is a sensor enzyme that plays a major role in the regulation of carbon metabolism and sugar transport: it mediates carbon catabolite repression (CCR), and regulates PTS-catalyzed carbohydrate uptake and inducer exclusion. This chain is HPr kinase/phosphorylase, found in Streptococcus pneumoniae serotype 2 (strain D39 / NCTC 7466).